Reading from the N-terminus, the 839-residue chain is LPS-assembly protein LptD (839 aa).

Residues 1-21 form the signal peptide; that stretch reads MAIGITACVLSLINYQGLAYS.

It belongs to the LptD family. As to quaternary structure, component of the lipopolysaccharide transport and assembly complex. Interacts with LptE and LptA.

It localises to the cell outer membrane. Its function is as follows. Together with LptE, is involved in the assembly of lipopolysaccharide (LPS) at the surface of the outer membrane. In Legionella pneumophila (strain Paris), this protein is LPS-assembly protein LptD.